The sequence spans 297 residues: Bifunctional protein FolD 1 (297 aa).

Residues 164–166 (GRS) and T230 contribute to the NADP(+) site.

It belongs to the tetrahydrofolate dehydrogenase/cyclohydrolase family. Homodimer.

The enzyme catalyses (6R)-5,10-methylene-5,6,7,8-tetrahydrofolate + NADP(+) = (6R)-5,10-methenyltetrahydrofolate + NADPH. It carries out the reaction (6R)-5,10-methenyltetrahydrofolate + H2O = (6R)-10-formyltetrahydrofolate + H(+). Its pathway is one-carbon metabolism; tetrahydrofolate interconversion. Catalyzes the oxidation of 5,10-methylenetetrahydrofolate to 5,10-methenyltetrahydrofolate and then the hydrolysis of 5,10-methenyltetrahydrofolate to 10-formyltetrahydrofolate. This is Bifunctional protein FolD 1 from Rhodococcus jostii (strain RHA1).